The sequence spans 508 residues: Maturase K (508 aa).

The protein belongs to the intron maturase 2 family. MatK subfamily.

The protein resides in the plastid. It localises to the chloroplast. Usually encoded in the trnK tRNA gene intron. Probably assists in splicing its own and other chloroplast group II introns. The polypeptide is Maturase K (Abies bracteata (Bristle-cone fir)).